The primary structure comprises 513 residues: Probable metalloreductase AIM14 (513 aa).

7 helical membrane passes run 22 to 42, 66 to 86, 103 to 123, 138 to 158, 166 to 186, 193 to 213, and 219 to 239; these read GYII…AHFL, PFWV…FTNV, LAFC…LLGQ, LIIL…TIHH, WANL…IVSS, FYSY…LLMI, and GVSD…ASRV. The Ferric oxidoreductase domain maps to 100–211; it reads LGRLAFCLVP…NFTVALFVLL (112 aa). An FAD-binding FR-type domain is found at 240-368; sequence YNGYSVPGLT…GIPLYEYFDN (129 aa).

Belongs to the ferric reductase (FRE) family. AIM14 subfamily.

It is found in the membrane. In terms of biological role, probable cell surface metalloreductase. May be involved in iron or copper homeostasis. The sequence is that of Probable metalloreductase AIM14 (AIM14) from Clavispora lusitaniae (strain ATCC 42720) (Yeast).